Reading from the N-terminus, the 533-residue chain is GMP synthase [glutamine-hydrolyzing] (533 aa).

The Glutamine amidotransferase type-1 domain occupies 25–215; sequence SIVIFDFGSQ…VFNICKCHAN (191 aa). Catalysis depends on cysteine 102, which acts as the Nucleophile. Residues histidine 189 and glutamate 191 contribute to the active site. One can recognise a GMPS ATP-PPase domain in the interval 216 to 408; it reads WTMGNYIQES…LGLPDEMIWR (193 aa). 243 to 249 serves as a coordination point for ATP; it reads SGGVDSA.

As to quaternary structure, homodimer.

It carries out the reaction XMP + L-glutamine + ATP + H2O = GMP + L-glutamate + AMP + diphosphate + 2 H(+). It functions in the pathway purine metabolism; GMP biosynthesis; GMP from XMP (L-Gln route): step 1/1. In terms of biological role, catalyzes the synthesis of GMP from XMP. In Dehalococcoides mccartyi (strain CBDB1), this protein is GMP synthase [glutamine-hydrolyzing].